A 147-amino-acid polypeptide reads, in one-letter code: UPF0306 protein YhbP (147 aa).

Belongs to the UPF0306 family.

The protein is UPF0306 protein YhbP of Escherichia coli (strain K12 / MC4100 / BW2952).